The following is a 357-amino-acid chain: UDP-N-acetylglucosamine--N-acetylmuramyl-(pentapeptide) pyrophosphoryl-undecaprenol N-acetylglucosamine transferase (357 aa).

UDP-N-acetyl-alpha-D-glucosamine is bound by residues T14–G16, N120, R164, S194, and Q291.

It belongs to the glycosyltransferase 28 family. MurG subfamily.

It is found in the cell inner membrane. It catalyses the reaction di-trans,octa-cis-undecaprenyl diphospho-N-acetyl-alpha-D-muramoyl-L-alanyl-D-glutamyl-meso-2,6-diaminopimeloyl-D-alanyl-D-alanine + UDP-N-acetyl-alpha-D-glucosamine = di-trans,octa-cis-undecaprenyl diphospho-[N-acetyl-alpha-D-glucosaminyl-(1-&gt;4)]-N-acetyl-alpha-D-muramoyl-L-alanyl-D-glutamyl-meso-2,6-diaminopimeloyl-D-alanyl-D-alanine + UDP + H(+). It participates in cell wall biogenesis; peptidoglycan biosynthesis. Cell wall formation. Catalyzes the transfer of a GlcNAc subunit on undecaprenyl-pyrophosphoryl-MurNAc-pentapeptide (lipid intermediate I) to form undecaprenyl-pyrophosphoryl-MurNAc-(pentapeptide)GlcNAc (lipid intermediate II). This is UDP-N-acetylglucosamine--N-acetylmuramyl-(pentapeptide) pyrophosphoryl-undecaprenol N-acetylglucosamine transferase from Fusobacterium nucleatum subsp. nucleatum (strain ATCC 25586 / DSM 15643 / BCRC 10681 / CIP 101130 / JCM 8532 / KCTC 2640 / LMG 13131 / VPI 4355).